Here is a 287-residue protein sequence, read N- to C-terminus: Universal stress protein Slr1230 (287 aa).

The protein belongs to the universal stress protein A family.

The sequence is that of Universal stress protein Slr1230 from Synechocystis sp. (strain ATCC 27184 / PCC 6803 / Kazusa).